The following is a 399-amino-acid chain: Na(+)/H(+) antiporter NhaA (399 aa).

The next 11 membrane-spanning stretches (helical) occupy residues 12–32, 60–80, 94–114, 126–146, 155–175, 178–198, 206–226, 263–283, 284–304, 336–356, and 372–392; these read LDIAAGVILVGAAVLALIAAN, LLLWINDGLMAVFFLLVGLEI, LAALPAVAAVGGMVVPALIYA, GWAIPAATDIAFALGILTLLG, IFLTALAIIDDLGAILIIAFF, ASLSPLALLLAAACLALLIGL, LWPYLLIGVVLWVCVLKSGVH, PWVTYAILPLFAFANAGVSLA, GLPPSALLAPVPLGIVLGLFL, GVALITGVGFTMSLFIGTLAF, and LGVLSGSLLSGVIGYLVLRLS.

The protein belongs to the NhaA Na(+)/H(+) (TC 2.A.33) antiporter family.

The protein resides in the cell inner membrane. It catalyses the reaction Na(+)(in) + 2 H(+)(out) = Na(+)(out) + 2 H(+)(in). Functionally, na(+)/H(+) antiporter that extrudes sodium in exchange for external protons. In Rhodospirillum rubrum (strain ATCC 11170 / ATH 1.1.1 / DSM 467 / LMG 4362 / NCIMB 8255 / S1), this protein is Na(+)/H(+) antiporter NhaA.